The primary structure comprises 387 residues: Dual-specificity RNA methyltransferase RlmN (387 aa).

Glutamate 93 functions as the Proton acceptor in the catalytic mechanism. Residues 99–343 enclose the Radical SAM core domain; that stretch reads EENRGTLCIS…TTVRKTRGDD (245 aa). A disulfide bridge links cysteine 106 with cysteine 348. Residues cysteine 113, cysteine 117, and cysteine 120 each coordinate [4Fe-4S] cluster. S-adenosyl-L-methionine contacts are provided by residues 172-173, serine 204, 226-228, and asparagine 305; these read GE and SLH. Cysteine 348 (S-methylcysteine intermediate) is an active-site residue.

This sequence belongs to the radical SAM superfamily. RlmN family. The cofactor is [4Fe-4S] cluster.

Its subcellular location is the cytoplasm. It carries out the reaction adenosine(2503) in 23S rRNA + 2 reduced [2Fe-2S]-[ferredoxin] + 2 S-adenosyl-L-methionine = 2-methyladenosine(2503) in 23S rRNA + 5'-deoxyadenosine + L-methionine + 2 oxidized [2Fe-2S]-[ferredoxin] + S-adenosyl-L-homocysteine. It catalyses the reaction adenosine(37) in tRNA + 2 reduced [2Fe-2S]-[ferredoxin] + 2 S-adenosyl-L-methionine = 2-methyladenosine(37) in tRNA + 5'-deoxyadenosine + L-methionine + 2 oxidized [2Fe-2S]-[ferredoxin] + S-adenosyl-L-homocysteine. In terms of biological role, specifically methylates position 2 of adenine 2503 in 23S rRNA and position 2 of adenine 37 in tRNAs. m2A2503 modification seems to play a crucial role in the proofreading step occurring at the peptidyl transferase center and thus would serve to optimize ribosomal fidelity. This Janthinobacterium sp. (strain Marseille) (Minibacterium massiliensis) protein is Dual-specificity RNA methyltransferase RlmN.